The sequence spans 216 residues: Uracil phosphoribosyltransferase (216 aa).

Residues Arg-85, Arg-110, and 135–143 (DPMVATGYS) contribute to the 5-phospho-alpha-D-ribose 1-diphosphate site. Uracil is bound by residues Ile-200 and 205–207 (GDA). Position 206 (Asp-206) interacts with 5-phospho-alpha-D-ribose 1-diphosphate.

Belongs to the UPRTase family. Mg(2+) serves as cofactor.

It catalyses the reaction UMP + diphosphate = 5-phospho-alpha-D-ribose 1-diphosphate + uracil. Its pathway is pyrimidine metabolism; UMP biosynthesis via salvage pathway; UMP from uracil: step 1/1. With respect to regulation, allosterically activated by GTP. Catalyzes the conversion of uracil and 5-phospho-alpha-D-ribose 1-diphosphate (PRPP) to UMP and diphosphate. The protein is Uracil phosphoribosyltransferase of Burkholderia multivorans (strain ATCC 17616 / 249).